Reading from the N-terminus, the 280-residue chain is uncharacterized protein (280 aa).

The segment covering 1–10 (MSSSIKKLKK) has biased composition (basic residues). The segment at 1–45 (MSSSIKKLKKDTKDTDKTPSKKIYQETHNSEDSEDSEDSDNENNT) is disordered. The span at 11–31 (DTKDTDKTPSKKIYQETHNSE) shows a compositional bias: basic and acidic residues. The span at 32 to 41 (DSEDSEDSDN) shows a compositional bias: acidic residues.

This is an uncharacterized protein from Acanthamoeba polyphaga mimivirus (APMV).